The chain runs to 379 residues: Chaperone protein DnaJ (379 aa).

A J domain is found at 4 to 69 (DLYETLGVQK…QKRAAYDRYG (66 aa)). A CR-type zinc finger spans residues 137-215 (GKTAQIRVPT…CHGQGRVVEE (79 aa)). 8 residues coordinate Zn(2+): Cys-150, Cys-153, Cys-167, Cys-170, Cys-189, Cys-192, Cys-203, and Cys-206. 4 CXXCXGXG motif repeats span residues 150–157 (CDVCTGTG), 167–174 (CGTCQGTG), 189–196 (CPTCGGRG), and 203–210 (CTKCHGQG).

It belongs to the DnaJ family. In terms of assembly, homodimer. Zn(2+) serves as cofactor.

Its subcellular location is the cytoplasm. In terms of biological role, participates actively in the response to hyperosmotic and heat shock by preventing the aggregation of stress-denatured proteins and by disaggregating proteins, also in an autonomous, DnaK-independent fashion. Unfolded proteins bind initially to DnaJ; upon interaction with the DnaJ-bound protein, DnaK hydrolyzes its bound ATP, resulting in the formation of a stable complex. GrpE releases ADP from DnaK; ATP binding to DnaK triggers the release of the substrate protein, thus completing the reaction cycle. Several rounds of ATP-dependent interactions between DnaJ, DnaK and GrpE are required for fully efficient folding. Also involved, together with DnaK and GrpE, in the DNA replication of plasmids through activation of initiation proteins. This Rhizobium meliloti (strain 1021) (Ensifer meliloti) protein is Chaperone protein DnaJ.